We begin with the raw amino-acid sequence, 357 residues long: Dehydrogenase FUB6 (357 aa).

A compositionally biased stretch (polar residues) spans 1 to 17 (MGGEVSNKTWVFKQSPS). The disordered stretch occupies residues 1-22 (MGGEVSNKTWVFKQSPSGLPEP).

Belongs to the zinc-containing alcohol dehydrogenase family. Quinone oxidoreductase subfamily.

It participates in mycotoxin biosynthesis. Functionally, dehydrogenase; part of the gene cluster that mediates the biosynthesis of fusaric acid, a mycotoxin with low to moderate toxicity to animals and humans, but with high phytotoxic properties. L-aspartate is suggested as fusaric acid amino acid precursor that is activated and further processed to O-acetyl-L-homoserine by cluster enzymes aspartate kinase FUB3 and homoserine O-acetyltransferase FUB5, as well as enzymes of the primary metabolism. The polyketide synthase (PKS) FUB1 generates the triketide trans-2-hexenal which is presumptively released by the hydrolase FUB4 and linked to the NRPS-bound amino acid precursor by NAD(P)-dependent dehydrogenase FUB6. FUB1, FUB4, and the non-canonical NRPS Fub8 may form an enzyme complex. Further processing of the NRPS-bound intermediate might be carried out by FUB6 and the O-acetylhomoserine FUB7, enabling a spontaneous electrocyclization to close the carbon backbone of fusaric acid. Dihydrofusaric acid is likely to be released via reduction by the thioester reductase (TR) domain of FUB8 whereupon the final oxidation to fusaric acid may (also) be performed by the FMN-dependent dehydrogenase FUB9. The chain is Dehydrogenase FUB6 from Fusarium oxysporum f. sp. lycopersici (strain 4287 / CBS 123668 / FGSC 9935 / NRRL 34936) (Fusarium vascular wilt of tomato).